The primary structure comprises 433 residues: O-methyltransferase VdtC (433 aa).

An S-adenosyl-L-methionine-binding site is contributed by D284. The active-site Proton acceptor is H335.

The protein belongs to the class I-like SAM-binding methyltransferase superfamily. Cation-independent O-methyltransferase family. COMT subfamily.

It catalyses the reaction 7,9,10-trihydroxy-3-(2-oxopropyl)-1H-benzo[g]isochromen-1-one + S-adenosyl-L-methionine = 9,10-dihydroxy-7-methoxy-3-(2-oxopropyl)-1H-benzo[g]isochromen-1-one + S-adenosyl-L-homocysteine + H(+). It functions in the pathway secondary metabolite biosynthesis. O-methyltransferase; part of the gene cluster that mediates the biosynthesis of viriditoxin, one of the 'classical' secondary metabolites produced by fungi and that has antibacterial activity. The first step is performed by the polyketide synthase VdtA which condenses one acetyl-CoA and 6 malonyl-CoA units to form the heptaketide monomer backbone of viriditoxin. The product of VdtA is then O-methylated on C7 by the O-methyltransferase VdtC. The O-methyl group is important for the stereoselective coupling of the monomers at the final step of viriditoxin biosynthesis. The short-chain dehydrogenase/reductase VdtF then acts as a stereospecific reductase converting the pyrone to dihydropyrone via the reduction of the C3-C4 double bond. The FAD-binding monooxygenase VdtE then converts the ketone group into a methyl-ester group to yield semi-viriditoxin. Finally, the laccase VdtB is involved in dimerization of 2 semi-viriditoxin molecules to yield the final viriditoxin. VdtB is responsible for the regioselective 6,6'-coupling of semi-viriditoxin, which yields (M)-viriditoxin and (P)-viriditoxin at a ratio of 1:2. The non-catalytic carboxylesterase-like protein VdtD affects the stereochemistical outcome of the coupling. The highly reducing polyketide synthase VdtX is not involved in viriditoxin synthesis, but might possibly play a role in the production of additional metabolites not identified yet. This Byssochlamys spectabilis (Paecilomyces variotii) protein is O-methyltransferase VdtC.